Here is a 357-residue protein sequence, read N- to C-terminus: Protein BMRF2 (357 aa).

The Virion surface segment spans residues 1–11 (MFSCKQHLSLG). A membrane pass occupies residues 12–32 (ACVFCLGLLASTPFIWCFVFA). The Virion surface segment spans residues 33–46 (NLLSLEIFSPWQTH). Positions 47–67 (VYRLGFPTACLMAVLWTLVPA) form a transmembrane segment. Residues 68 to 70 (KHA) lie on the Virion surface side of the membrane. A transmembrane span lies at residues 71–91 (VRAVTPAIMLNIASALIFFSL). Residues 92 to 98 (RVYSTST) are Virion surface-facing. The hydrophobic stretch at 99–121 (WVSAPCLFLANLPLLCLWPRLAI) threads the membrane. Residues 122–133 (EIVYICPAIHQR) lie on the Virion surface side of the membrane. Over 134 to 154 (FFELGLLLACTIFALSVVSRA) the chain traverses the membrane. The Virion surface portion of the chain corresponds to 155–158 (LEVS). The segment at 159–179 (AVFMSPFFIFLALGSGSLAGA) is a transmembrane helix. The Virion surface portion of the chain corresponds to 180–217 (RRNQIYTSGLERRRSIFCARGDHSVASLKETLHKCPWD). Positions 199 to 201 (RGD) match the Integrin binding site motif. The chain crosses the lipid bilayer at residues 218–238 (LLAISALTVLVVCVMIVLHVH). Topologically, residues 239-240 (AE) are virion surface. A transmembrane span lies at residues 241–261 (VFFGLSRYLPLFLCGAMASGG). The Virion surface portion of the chain corresponds to 262-267 (LYLGHS). A transmembrane helix spans residues 268-288 (SIIACVMATLCTLTSVVVYFL). Over 289–298 (HETLGPLGKT) the chain is Virion surface. Positions 299 to 319 (VLFISIFVYYFSGVAALSAAM) form a transmembrane segment. Residues 320–335 (RYKLKKFVNGPLVHLR) are Virion surface-facing. Residues 336-356 (VVYMCCFVFTFCEYLLVTFIK) are membrane-embedded. Ser-357 is a topological domain (virion surface).

Belongs to the herpesviridae BMRF2 family. In terms of assembly, interacts with BDLF2. Interacts with host beta1 integrin family. In terms of processing, extensively glycosylated by O-linked oligosaccharides.

It localises to the virion membrane. The protein localises to the host cell membrane. In terms of biological role, facilitates virus attachment to oral epithelial cells by binding to host beta1 integrin family. Participates in rearrangement of cellular actin to increase intercellular contacts by binding BDLF2 and thereby promote virus cell-to-cell spreading. The protein is Protein BMRF2 of Homo sapiens (Human).